Reading from the N-terminus, the 547-residue chain is Glucose-6-phosphate isomerase (547 aa).

The active-site Proton donor is the Glu-351. Residues His-382 and Lys-510 contribute to the active site.

Belongs to the GPI family.

The protein resides in the cytoplasm. It catalyses the reaction alpha-D-glucose 6-phosphate = beta-D-fructose 6-phosphate. It functions in the pathway carbohydrate biosynthesis; gluconeogenesis. It participates in carbohydrate degradation; glycolysis; D-glyceraldehyde 3-phosphate and glycerone phosphate from D-glucose: step 2/4. In terms of biological role, catalyzes the reversible isomerization of glucose-6-phosphate to fructose-6-phosphate. This Saccharophagus degradans (strain 2-40 / ATCC 43961 / DSM 17024) protein is Glucose-6-phosphate isomerase.